Reading from the N-terminus, the 428-residue chain is Ribulose bisphosphate carboxylase (428 aa).

The Proton acceptor role is filled by lysine 151. Residue lysine 153 coordinates substrate. Mg(2+) is bound by residues lysine 177, aspartate 179, and glutamate 180. Lysine 177 bears the N6-carboxylysine mark. Residue histidine 270 is the Proton acceptor of the active site. Substrate contacts are provided by residues arginine 271, histidine 303, 354 to 356 (SGG), and 376 to 379 (QFGG).

It belongs to the RuBisCO large chain family. Type III subfamily. In terms of assembly, homodimer. In contrast to form I RuBisCO, the form III RuBisCO is composed solely of large subunits. The cofactor is Mg(2+).

It catalyses the reaction 2 (2R)-3-phosphoglycerate + 2 H(+) = D-ribulose 1,5-bisphosphate + CO2 + H2O. The catalysed reaction is D-ribulose 1,5-bisphosphate + O2 = 2-phosphoglycolate + (2R)-3-phosphoglycerate + 2 H(+). With respect to regulation, reversibly inhibited by O(2). Catalyzes the addition of molecular CO(2) and H(2)O to ribulose 1,5-bisphosphate (RuBP), generating two molecules of 3-phosphoglycerate (3-PGA). Functions in an archaeal AMP degradation pathway, together with AMP phosphorylase and R15P isomerase. The chain is Ribulose bisphosphate carboxylase from Methanosarcina acetivorans (strain ATCC 35395 / DSM 2834 / JCM 12185 / C2A).